Reading from the N-terminus, the 400-residue chain is Probable tRNA pseudouridine synthase D (400 aa).

Asp89 (nucleophile) is an active-site residue. In terms of domain architecture, TRUD spans 162-357 (GVPNYYGLQR…AGGDRKPALL (196 aa)).

The protein belongs to the pseudouridine synthase TruD family.

It carries out the reaction uridine(13) in tRNA = pseudouridine(13) in tRNA. Its function is as follows. Could be responsible for synthesis of pseudouridine from uracil-13 in transfer RNAs. This is Probable tRNA pseudouridine synthase D from Methanopyrus kandleri (strain AV19 / DSM 6324 / JCM 9639 / NBRC 100938).